A 208-amino-acid polypeptide reads, in one-letter code: Imidazoleglycerol-phosphate dehydratase (208 aa).

Residues 1-22 (MTEDTETSSTGAGADDRTAAIS) are disordered.

This sequence belongs to the imidazoleglycerol-phosphate dehydratase family.

It is found in the cytoplasm. It carries out the reaction D-erythro-1-(imidazol-4-yl)glycerol 3-phosphate = 3-(imidazol-4-yl)-2-oxopropyl phosphate + H2O. Its pathway is amino-acid biosynthesis; L-histidine biosynthesis; L-histidine from 5-phospho-alpha-D-ribose 1-diphosphate: step 6/9. This is Imidazoleglycerol-phosphate dehydratase from Haloquadratum walsbyi (strain DSM 16790 / HBSQ001).